Consider the following 263-residue polypeptide: Regulatory protein RecX (263 aa).

The protein belongs to the RecX family.

The protein resides in the cytoplasm. Its function is as follows. Modulates RecA activity. This Bacillus licheniformis (strain ATCC 14580 / DSM 13 / JCM 2505 / CCUG 7422 / NBRC 12200 / NCIMB 9375 / NCTC 10341 / NRRL NRS-1264 / Gibson 46) protein is Regulatory protein RecX.